The following is a 417-amino-acid chain: Sulfate adenylyltransferase (417 aa).

A compositionally biased stretch (polar residues) spans 1–10 (MTSITANQKP). The disordered stretch occupies residues 1-20 (MTSITANQKPSKLVPPHGSP).

Belongs to the sulfate adenylyltransferase family.

The catalysed reaction is sulfate + ATP + H(+) = adenosine 5'-phosphosulfate + diphosphate. It functions in the pathway sulfur metabolism; hydrogen sulfide biosynthesis; sulfite from sulfate: step 1/3. This is Sulfate adenylyltransferase from Psychrobacter arcticus (strain DSM 17307 / VKM B-2377 / 273-4).